We begin with the raw amino-acid sequence, 352 residues long: Ion-translocating oxidoreductase complex subunit D (352 aa).

The next 4 helical transmembrane spans lie at 20–40 (IMLL…WFFG), 44–64 (LFQI…VLSL), 78–109 (ALLT…IIIA), and 123–143 (PAMI…TSWL). Residue threonine 187 is modified to FMN phosphoryl threonine. Helical transmembrane passes span 214–234 (VLAG…GVFL), 242–262 (WHIP…GWLF), 267–287 (LASP…FFIL), 301–321 (LIFG…GGYP), and 322–342 (DGVA…DYYT).

This sequence belongs to the NqrB/RnfD family. As to quaternary structure, the complex is composed of six subunits: RsxA, RsxB, RsxC, RsxD, RsxE and RsxG. It depends on FMN as a cofactor.

The protein localises to the cell inner membrane. Functionally, part of a membrane-bound complex that couples electron transfer with translocation of ions across the membrane. Required to maintain the reduced state of SoxR. This chain is Ion-translocating oxidoreductase complex subunit D, found in Salmonella arizonae (strain ATCC BAA-731 / CDC346-86 / RSK2980).